A 301-amino-acid chain; its full sequence is (R)-2-haloacid dehalogenase (301 aa).

Belongs to the HAD-like hydrolase superfamily. S-2-haloalkanoic acid dehalogenase family. Homotetramer.

It carries out the reaction an (R)-2-haloacid + H2O = a (2S)-2-hydroxycarboxylate + a halide anion + H(+). In terms of biological role, catalyzes the hydrolytic dehalogenation of small (R)-2-haloalkanoic acids to yield the corresponding (S)-2-hydroxyalkanoic acids. Acts on acids of short chain lengths, C(2) to C(4), with inversion of configuration at C-2. The sequence is that of (R)-2-haloacid dehalogenase (hadD) from Pseudomonas putida (Arthrobacter siderocapsulatus).